Reading from the N-terminus, the 964-residue chain is Phosphoenolpyruvate carboxylase (964 aa).

Ser-11 bears the Phosphoserine mark. Catalysis depends on residues His-172 and Lys-600.

The protein belongs to the PEPCase type 1 family. In terms of assembly, homotetramer. Mg(2+) is required as a cofactor.

It localises to the cytoplasm. It carries out the reaction oxaloacetate + phosphate = phosphoenolpyruvate + hydrogencarbonate. The protein operates within photosynthesis; C4 acid pathway. With respect to regulation, by light-reversible phosphorylation. Functionally, through the carboxylation of phosphoenolpyruvate (PEP) it forms oxaloacetate, a four-carbon dicarboxylic acid source for the tricarboxylic acid cycle. This is Phosphoenolpyruvate carboxylase from Amaranthus hypochondriacus (Prince-of-Wales feather).